Consider the following 405-residue polypeptide: Putative arsenical pump-driving ATPase (405 aa).

Position 8–15 (Gly8–Thr15) interacts with ATP.

Belongs to the arsA ATPase family.

The enzyme catalyses arsenite(in) + ATP + H2O = arsenite(out) + ADP + phosphate + H(+). In terms of biological role, anion-transporting ATPase. Catalyzes the extrusion of arsenite. This is Putative arsenical pump-driving ATPase from Prosthecochloris vibrioformis (Chlorobium vibrioforme).